The following is a 523-amino-acid chain: Putative oxidoreductase TDA3 (523 aa).

Low complexity predominate over residues 157–172 (NSSLSSSGSSLKNDSA). A disordered region spans residues 157–189 (NSSLSSSGSSLKNDSASNEEEGSDIHVSSSVPS). Phosphoserine occurs at positions 189, 204, and 306.

Belongs to the TDA3 family. Interacts with BTN2.

It is found in the cytoplasm. Its subcellular location is the late endosome. Functionally, putative oxidoreductase that negatively regulates the retrieval of cargo from late endosomes to the Golgi. Regulates YIF1 and KEX2 localization. Required for fast DNA replication. The chain is Putative oxidoreductase TDA3 (TDA3) from Saccharomyces cerevisiae (strain ATCC 204508 / S288c) (Baker's yeast).